The primary structure comprises 102 residues: Small ribosomal subunit protein uS10 (102 aa).

The protein belongs to the universal ribosomal protein uS10 family. In terms of assembly, part of the 30S ribosomal subunit.

In terms of biological role, involved in the binding of tRNA to the ribosomes. The protein is Small ribosomal subunit protein uS10 of Methanosphaerula palustris (strain ATCC BAA-1556 / DSM 19958 / E1-9c).